The following is a 267-amino-acid chain: B3 domain-containing protein Os02g0455800 (267 aa).

Positions 30 to 131 (EKFLMPSDLC…RLFICCRLGT (102 aa)) form a DNA-binding region, TF-B3. Residues 172-221 (QARLHDGNQDGGGAPSRHVPSSGRRVEAQLSRVSSRRQRRTMKHSIPEPT) form a disordered region. The span at 205-214 (SSRRQRRTMK) shows a compositional bias: basic residues.

The protein localises to the nucleus. The sequence is that of B3 domain-containing protein Os02g0455800 from Oryza sativa subsp. japonica (Rice).